Reading from the N-terminus, the 485-residue chain is Glutamate mutase epsilon subunit (485 aa).

Arg-100 lines the L-glutamate pocket. Position 123 (Asn-123) interacts with adenosylcob(III)alamin. Residues 149 to 150 (KH) and Asp-171 each bind L-glutamate. Pro-180, Phe-297, Lys-326, and Glu-330 together coordinate adenosylcob(III)alamin.

This sequence belongs to the methylaspartate mutase GlmE subunit family. Heterotetramer composed of 2 epsilon subunits (GlmE) and 2 sigma subunits (GlmS). GlmE exists as a homodimer and GlmS as a monomer. Adenosylcob(III)alamin serves as cofactor.

It carries out the reaction (2S,3S)-3-methyl-L-aspartate = L-glutamate. It participates in amino-acid degradation; L-glutamate degradation via mesaconate pathway; acetate and pyruvate from L-glutamate: step 1/4. Its function is as follows. Catalyzes the carbon skeleton rearrangement of L-glutamate to L-threo-3-methylaspartate ((2S,3S)-3-methylaspartate). The protein is Glutamate mutase epsilon subunit of Fusobacterium nucleatum subsp. nucleatum (strain ATCC 25586 / DSM 15643 / BCRC 10681 / CIP 101130 / JCM 8532 / KCTC 2640 / LMG 13131 / VPI 4355).